Here is a 560-residue protein sequence, read N- to C-terminus: Formate--tetrahydrofolate ligase (560 aa).

69 to 76 (TPAGEGKS) is a binding site for ATP.

The protein belongs to the formate--tetrahydrofolate ligase family.

The catalysed reaction is (6S)-5,6,7,8-tetrahydrofolate + formate + ATP = (6R)-10-formyltetrahydrofolate + ADP + phosphate. The protein operates within one-carbon metabolism; tetrahydrofolate interconversion. The chain is Formate--tetrahydrofolate ligase from Listeria innocua serovar 6a (strain ATCC BAA-680 / CLIP 11262).